The chain runs to 612 residues: uncharacterized protein (612 aa).

Polar residues predominate over residues L176–E196. The interval L176 to S203 is disordered.

To yeast YNL034w.

This is an uncharacterized protein from Saccharomyces cerevisiae (strain ATCC 204508 / S288c) (Baker's yeast).